A 173-amino-acid polypeptide reads, in one-letter code: Large ribosomal subunit protein uL16 (173 aa).

This sequence belongs to the universal ribosomal protein uL16 family.

The protein is Large ribosomal subunit protein uL16 of Methanococcus maripaludis (strain C6 / ATCC BAA-1332).